Here is a 236-residue protein sequence, read N- to C-terminus: 2-C-methyl-D-erythritol 4-phosphate cytidylyltransferase (236 aa).

Belongs to the IspD/TarI cytidylyltransferase family. IspD subfamily. Homodimer.

It carries out the reaction 2-C-methyl-D-erythritol 4-phosphate + CTP + H(+) = 4-CDP-2-C-methyl-D-erythritol + diphosphate. It participates in isoprenoid biosynthesis; isopentenyl diphosphate biosynthesis via DXP pathway; isopentenyl diphosphate from 1-deoxy-D-xylulose 5-phosphate: step 2/6. Its function is as follows. Catalyzes the formation of 4-diphosphocytidyl-2-C-methyl-D-erythritol from CTP and 2-C-methyl-D-erythritol 4-phosphate (MEP). The polypeptide is 2-C-methyl-D-erythritol 4-phosphate cytidylyltransferase (Salmonella newport (strain SL254)).